The primary structure comprises 368 residues: Quinolinate synthase (368 aa).

Residues His-46 and Ser-63 each contribute to the iminosuccinate site. Position 110 (Cys-110) interacts with [4Fe-4S] cluster. Iminosuccinate-binding positions include 141–143 (YVN) and Ser-162. Residue Cys-230 participates in [4Fe-4S] cluster binding. Residues 256–258 (HPE) and Thr-273 each bind iminosuccinate. [4Fe-4S] cluster is bound at residue Cys-320.

The protein belongs to the quinolinate synthase family. Type 3 subfamily. [4Fe-4S] cluster serves as cofactor.

Its subcellular location is the cytoplasm. The catalysed reaction is iminosuccinate + dihydroxyacetone phosphate = quinolinate + phosphate + 2 H2O + H(+). It participates in cofactor biosynthesis; NAD(+) biosynthesis; quinolinate from iminoaspartate: step 1/1. Functionally, catalyzes the condensation of iminoaspartate with dihydroxyacetone phosphate to form quinolinate. The sequence is that of Quinolinate synthase from Bacillus cereus (strain ZK / E33L).